Here is a 170-residue protein sequence, read N- to C-terminus: Large ribosomal subunit protein uL22c (170 aa).

Belongs to the universal ribosomal protein uL22 family. As to quaternary structure, part of the 50S ribosomal subunit.

The protein localises to the plastid. The protein resides in the chloroplast. Functionally, this protein binds specifically to 23S rRNA. In terms of biological role, the globular domain of the protein is located near the polypeptide exit tunnel on the outside of the subunit, while an extended beta-hairpin is found that lines the wall of the exit tunnel in the center of the 70S ribosome. This Nandina domestica (Heavenly bamboo) protein is Large ribosomal subunit protein uL22c (rpl22).